Here is a 564-residue protein sequence, read N- to C-terminus: DNA ligase B (564 aa).

The N6-AMP-lysine intermediate role is filled by Lys130.

Belongs to the NAD-dependent DNA ligase family. LigB subfamily.

It carries out the reaction NAD(+) + (deoxyribonucleotide)n-3'-hydroxyl + 5'-phospho-(deoxyribonucleotide)m = (deoxyribonucleotide)n+m + AMP + beta-nicotinamide D-nucleotide.. Catalyzes the formation of phosphodiester linkages between 5'-phosphoryl and 3'-hydroxyl groups in double-stranded DNA using NAD as a coenzyme and as the energy source for the reaction. This chain is DNA ligase B, found in Klebsiella pneumoniae subsp. pneumoniae (strain ATCC 700721 / MGH 78578).